A 483-amino-acid polypeptide reads, in one-letter code: Regulatory protein ViaA (483 aa).

Belongs to the ViaA family. As to quaternary structure, homodimer. Interacts with RavA.

It localises to the cytoplasm. Component of the RavA-ViaA chaperone complex, which may act on the membrane to optimize the function of some of the respiratory chains. ViaA stimulates the ATPase activity of RavA. The sequence is that of Regulatory protein ViaA from Salmonella schwarzengrund (strain CVM19633).